The primary structure comprises 96 residues: Large ribosomal subunit protein uL23 (96 aa).

This sequence belongs to the universal ribosomal protein uL23 family. Part of the 50S ribosomal subunit. Contacts protein L29, and trigger factor when it is bound to the ribosome.

In terms of biological role, one of the early assembly proteins it binds 23S rRNA. One of the proteins that surrounds the polypeptide exit tunnel on the outside of the ribosome. Forms the main docking site for trigger factor binding to the ribosome. This Solidesulfovibrio magneticus (strain ATCC 700980 / DSM 13731 / RS-1) (Desulfovibrio magneticus) protein is Large ribosomal subunit protein uL23.